The following is a 204-amino-acid chain: Thymidylate kinase (204 aa).

Position 11–18 (11–18 (GLDKSGKT)) interacts with ATP.

Belongs to the thymidylate kinase family.

The catalysed reaction is dTMP + ATP = dTDP + ADP. It functions in the pathway pyrimidine metabolism; dTTP biosynthesis. This chain is Thymidylate kinase (TMK), found in Ectromelia virus (strain Moscow) (ECTV).